Reading from the N-terminus, the 468-residue chain is MSSGKITQVIGPVVDVAFAAGDRLPEINNALVVYKNDEKKSKIVLEVALELGDGVVRTIAMESTDGLTRGLEVLDTGRPISVPVGKETLGRVFNVLGDTIDLDAPFGDDAERQPIHKKAPTFDELSTSSEILETGIKVIDLLAPYLKGGKVGLFGGAGVGKTVLIQELIHNIAQEHGGISVFTGVGERTREGNDLYWEMKESGVIEKTAMVFGQMNEPPGARMRVALTGLTIAEYFRDVEGQDVLLFIDNIFRFTQAGSEVSALLGRMPSAVGYQPTLATEMGQLQERITSTKKGSVTSIQAIYVPADDYTDPAPATAFAHLDSTTNLERKLVQLGIYPAVDPLASSSRALAPEIVGEEHYAVAAEVKRVLQRYHELQDIIAILGMDELSDEEKTLVARARRIQFFLSQNFNVAEQFTGQPGSYVPVAETVRGFKEILEGKHDKLPEDAFRGVGSIEDVLAKAEKMGF.

Position 155-162 (155-162 (GGAGVGKT)) interacts with ATP.

This sequence belongs to the ATPase alpha/beta chains family. As to quaternary structure, F-type ATPases have 2 components, CF(1) - the catalytic core - and CF(0) - the membrane proton channel. CF(1) has five subunits: alpha(3), beta(3), gamma(1), delta(1), epsilon(1). CF(0) has three main subunits: a(1), b(2) and c(9-12). The alpha and beta chains form an alternating ring which encloses part of the gamma chain. CF(1) is attached to CF(0) by a central stalk formed by the gamma and epsilon chains, while a peripheral stalk is formed by the delta and b chains.

The protein localises to the cell membrane. The enzyme catalyses ATP + H2O + 4 H(+)(in) = ADP + phosphate + 5 H(+)(out). Functionally, produces ATP from ADP in the presence of a proton gradient across the membrane. The catalytic sites are hosted primarily by the beta subunits. This chain is ATP synthase subunit beta, found in Streptococcus gordonii (strain Challis / ATCC 35105 / BCRC 15272 / CH1 / DL1 / V288).